A 348-amino-acid chain; its full sequence is Dihydroorotase (348 aa).

Zn(2+) is bound by residues H17 and H19. Substrate is bound by residues 19–21 and N45; that span reads HLR. K103, H140, and H178 together coordinate Zn(2+). Position 103 is an N6-carboxylysine (K103). H140 contributes to the substrate binding site. Residue L223 participates in substrate binding. D251 is a binding site for Zn(2+). Residue D251 is part of the active site. Residues H255 and A267 each contribute to the substrate site.

It belongs to the metallo-dependent hydrolases superfamily. DHOase family. Class II DHOase subfamily. As to quaternary structure, homodimer. Zn(2+) serves as cofactor.

It carries out the reaction (S)-dihydroorotate + H2O = N-carbamoyl-L-aspartate + H(+). Its pathway is pyrimidine metabolism; UMP biosynthesis via de novo pathway; (S)-dihydroorotate from bicarbonate: step 3/3. Catalyzes the reversible cyclization of carbamoyl aspartate to dihydroorotate. The protein is Dihydroorotase of Escherichia coli O7:K1 (strain IAI39 / ExPEC).